The chain runs to 243 residues: MAPRPLGPLVLALGGAAAVLGSVLFILWKAYFGRGRERRWDRGEAWWGADTARLPQWDEWEPEDEEDEPALEELEQREVLVLGLDGSGKSTFLRMLAGKPPVEGHVPTWGFNSVRLPTKNFEVDLLEIGGSQNLRFYWKEFVNEVDVLVFMVDSTDRLRLPWARQELQKLLDRDPDLPVVIVANKQDLSGAMNMVELQQELGLLASYNQREVFLLAASIAPAGSGFGEPGTVHIWKLLLQLLS.

GTP contacts are provided by residues 83–90, 127–131, and 184–187; these read GLDGSGKS, EIGGS, and NKQD.

The protein belongs to the small GTPase superfamily. Arf family.

The chain is ADP-ribosylation factor-like protein 10 (Arl10) from Mus musculus (Mouse).